We begin with the raw amino-acid sequence, 356 residues long: Protein RecA (356 aa).

Residue 68-75 (GPESSGKT) coordinates ATP.

This sequence belongs to the RecA family.

Its subcellular location is the cytoplasm. Its function is as follows. Can catalyze the hydrolysis of ATP in the presence of single-stranded DNA, the ATP-dependent uptake of single-stranded DNA by duplex DNA, and the ATP-dependent hybridization of homologous single-stranded DNAs. It interacts with LexA causing its activation and leading to its autocatalytic cleavage. The polypeptide is Protein RecA (Clostridium botulinum (strain Eklund 17B / Type B)).